Consider the following 269-residue polypeptide: Serine/arginine-rich splicing factor 5 (269 aa).

Residues C4–A74 enclose the RRM 1 domain. Positions R73–R105 are disordered. Positions A74–G83 are enriched in basic residues. S86 is modified (phosphoserine). One can recognise an RRM 2 domain in the interval N108 to S189. Residue K167 is modified to N6-acetyllysine. The disordered stretch occupies residues I174–N269. The segment covering K181–S226 has biased composition (basic residues). A phosphoserine mark is found at S224, S226, S230, S247, and S250. Positions R239–V251 are enriched in low complexity.

Belongs to the splicing factor SR family. In terms of assembly, found in a pre-mRNA splicing complex with SRSF4/SFRS4, SRSF5/SFRS5, SNRNP70, SNRPA1, SRRM1 and SRRM2. Interacts with RBMY; the interaction inhibits SRSF5 pre-mRNA splicing. Interacts (via RS domain) with PHF5A (via N-terminus). In terms of processing, extensively phosphorylated on serine residues in the RS domain.

It is found in the nucleus. In terms of biological role, may be required for progression through G1 and entry into S phase of cell growth. May play a regulatory role in pre-mRNA splicing. Autoregulates its own expression. Plays a role in constitutive splicing and can modulate the selection of alternative splice sites. This is Serine/arginine-rich splicing factor 5 (Srsf5) from Mus musculus (Mouse).